A 251-amino-acid chain; its full sequence is 1-(5-phosphoribosyl)-5-[(5-phosphoribosylamino)methylideneamino] imidazole-4-carboxamide isomerase (251 aa).

The Proton acceptor role is filled by D8. Catalysis depends on D131, which acts as the Proton donor.

This sequence belongs to the HisA/HisF family.

It localises to the cytoplasm. The catalysed reaction is 1-(5-phospho-beta-D-ribosyl)-5-[(5-phospho-beta-D-ribosylamino)methylideneamino]imidazole-4-carboxamide = 5-[(5-phospho-1-deoxy-D-ribulos-1-ylimino)methylamino]-1-(5-phospho-beta-D-ribosyl)imidazole-4-carboxamide. The protein operates within amino-acid biosynthesis; L-histidine biosynthesis; L-histidine from 5-phospho-alpha-D-ribose 1-diphosphate: step 4/9. The polypeptide is 1-(5-phosphoribosyl)-5-[(5-phosphoribosylamino)methylideneamino] imidazole-4-carboxamide isomerase (Azoarcus sp. (strain BH72)).